The sequence spans 99 residues: HssA/B-like protein 41 (99 aa).

Residues 1-29 (MTLFSSISSISNPMTSSKSSISSFGSGTS) are disordered.

It belongs to the hssA/B family.

The polypeptide is HssA/B-like protein 41 (hssl41) (Dictyostelium discoideum (Social amoeba)).